A 2293-amino-acid chain; its full sequence is MKGHQFKSWIFELREIVREIKNSHYFLDSWTQFNSVGSFIHIFFHQERFRKLLDPRIFSILLLRNSQGSTSNRYFTIKGVVLFVVAALLYRINNRNMVESKNLYLKGLLPIPMNSIGPRNDTSEESFGSSNINRLIVSLLYLTKGKKISESCFRDPKESTWVLPITQKFIMPESNWSSRWWRNWIGKKRDFCCKISNETVAGIYISFKEKDFKYLEFLFVYYMDDPIRKGHDWELFDRLSPSKRRNIINLNSGQLFEILVKDWICYLMFAFREKIPIEVEGFFKQQGAGSTIQSNDIEPVSHLFSRNKWAISLQNCAQFHMWQFHQDLFVSWGKNPHESDFLRKISRENWIWLDNVWLVNKDRFFSKVRNVSSNIQYDSTRSSFVQVTDSSQLNGSSDQFIDPFDSISNEDSEYHTLINQREIQQLKERSILLDPSFIQTEGREIESDRFPKYLSGYSSMPRLFTEREKRMNNHLLPEESEEFLGNPTRAIRSFFSDRWSELHLGSNPTERSTRDQKLLKKEQDVSFVPSRRSENKEIVNIFKIITYLQNTVSIHPISSDLGCDMVPKDELDMDSSNKISFLNKNPFFDLFHLFHERKRGGYTLRHDFESEERFQEMADLFTLSITEPDLVYHKGFAFSIDSYGLDQRQFLKEVFNSRDESKKKSLLVLPPIFYEENESFYRRIRKNWVRISCGNYLEDPKPKRVVFASNNIMEAVNQYRLIRNLIQIQFQYSPYGYIRNVLNRFFLMKRPDRNFEYGIQRDLIGNDTLNHRTIMKDTINQHLSNLKKSQKKRFDPLIFLSRTERSINRDPNAYRYKWSNGSKNFQEHLEHFVSERKSRFQVVFDRLCINQYSIDWSEVIDKKDLSKSLRFFLSKLLRFFLSKLLLFLSKLLLFLSNSLPFFFVSFENIPIHRSEIHIYELKGPNDQLCNQLLESIGLRIVHLKKLKPFLLDDHNTSQESEFLINGGTISPFLFNKIPKWMIDSFHTRKNRRKSFDNTDSYFSIVSHDQDNWLNPVKPFQRSSLISSFSKANRLRFLNNPHHFCFYCNKRFPFYVEKARLNNSDFTYGQFLTILFIHNKIFSSCGGKKKHAFLERDTISPSSIESQVSNIFISNDFPQSGDERYNLYKSFHFPIRSDPLVRRAIYSIADISGTPLIEGQRVNFERTYCQTLSDMNLSDSEEKSLHQYLNFNSNMGLIHTPCSEKYLQRKKRSLCLKKCVDKGQMDRTFQRDSAFSTLSKWNLFQTYMPWFFTSTGYKYLNLIFLDTFSDLLRILSSSQKFVSIFHDIMHGLDISWRILQKKLCLPQRNLISEISSKSLHNLLLSEEMIHPNNESSLISTHLRSPNVREVLYSILFLLLVAGYIVRTHLLFVSRAYSELQTEFEKIKSLMIPSYMIELRKLLDRYPTSELNSFWLKNLFLVALEQLGDCLEEIRGSGGNMLWGGDPAYGVKSIRSKKKDLKINFIDIIDLISIIPNPINRITFSRNTRHLSHTSKDIYSLIRKRKNVSGDWIDDKIESWVANSDSIDDKEREFLVQFSTLRAEKRIDQILLSLTHSDHLSKNDSGYQMIEQPGTIYLRYLVDIHKKSLMNYEFNTSCLAERRIFLAHYQTITYSQTSRGANSFHFPSHGKPFSLRLALSPSRSILVIGSIGTGRSYLVKYLATNSYVPFITVFLNKFLDNKPKGFFIDDIDIDDSDDIDASNDIDRELDTELELLTMMNALTMDMMSEIDRFYITLQFELAKAMSPCIIWIPNIHDLDVNESNYLALGLLVNSLSRDCERCSTRNILVIASTHIPQKVDPALIAPNKLNTCIKIRRLLIPQQRKHFFTLSYTRGFHLEKKMFHTNGFESITMGSSARDLVALTNEALSISITQKKSIIDTNTIRSALHRQTWDLRSQVRSVQDHGILFYQIGRAVAQNVLISNCPIDPISIYMKKKSCNEGDSYLYKWYFELGTSMKKFTILLYLLSCSAGLVAQDLWSLPGPDEKNRITSYGFIENDSDLVHGLLEVQGALVGSSRTEKDCSQFDNDRVTLLFRSEPRDPLYMMQDGSCSIVDQRFLYEKYESEFEEGEGEGVLDPQQIEEDLFNHIVWAPRIWRPRGFLFDCIERPNELGFPYLAGSFRGKQIIYDEKYELQENDSEFLQSGTMQYQRRDRSSKEQGFFRISQFIWDPADPLFFLFKDQPFVSVFSHREFFADEEMSKGLLTSQTDPPTSIYKRWFIKNTQEKHFELLIQRQRWLRTNSSLSNGFFRSNTLSESYQYLSNLFLSNGTLLDRMTKTLLKKRWLFPDEMKIGFM.

ATP is bound at residue 1647-1654 (GSIGTGRS).

The protein belongs to the Ycf2 family.

The protein resides in the plastid. It localises to the chloroplast stroma. In terms of biological role, probable ATPase of unknown function. Its presence in a non-photosynthetic plant (Epifagus virginiana) and experiments in tobacco indicate that it has an essential function which is probably not related to photosynthesis. The chain is Protein Ycf2 from Lobularia maritima (Sweet alyssum).